Reading from the N-terminus, the 510-residue chain is Proline--tRNA ligase 2 (510 aa).

This sequence belongs to the class-II aminoacyl-tRNA synthetase family. ProS type 3 subfamily. As to quaternary structure, homodimer.

Its subcellular location is the cytoplasm. The catalysed reaction is tRNA(Pro) + L-proline + ATP = L-prolyl-tRNA(Pro) + AMP + diphosphate. Catalyzes the attachment of proline to tRNA(Pro) in a two-step reaction: proline is first activated by ATP to form Pro-AMP and then transferred to the acceptor end of tRNA(Pro). The polypeptide is Proline--tRNA ligase 2 (Anaeromyxobacter dehalogenans (strain 2CP-C)).